A 130-amino-acid polypeptide reads, in one-letter code: Large ribosomal subunit protein bL19 (130 aa).

This sequence belongs to the bacterial ribosomal protein bL19 family.

Functionally, this protein is located at the 30S-50S ribosomal subunit interface and may play a role in the structure and function of the aminoacyl-tRNA binding site. The chain is Large ribosomal subunit protein bL19 from Gluconobacter oxydans (strain 621H) (Gluconobacter suboxydans).